The chain runs to 186 residues: RNA polymerase sigma factor NccH (186 aa).

The Polymerase core binding signature appears at 49 to 62; the sequence is DIVQDTFIAAWHAL. The segment at residues 152–171 is a DNA-binding region (H-T-H motif); sequence HPEAAMALGTSAKAVESRVA.

This sequence belongs to the sigma-70 factor family. ECF subfamily.

Functionally, sigma factors are initiation factors that promote the attachment of RNA polymerase to specific initiation sites and are then released. This sigma factor regulates the genes for a membrane-located efflux system that confers resistance to nickel, cobalt and cadmium. The polypeptide is RNA polymerase sigma factor NccH (nccH) (Alcaligenes xylosoxydans xylosoxydans (Achromobacter xylosoxidans)).